The chain runs to 250 residues: 5'-nucleotidase SurE (250 aa).

Positions 8, 9, 40, and 92 each coordinate a divalent metal cation.

This sequence belongs to the SurE nucleotidase family. A divalent metal cation serves as cofactor.

The protein localises to the cytoplasm. The enzyme catalyses a ribonucleoside 5'-phosphate + H2O = a ribonucleoside + phosphate. Nucleotidase that shows phosphatase activity on nucleoside 5'-monophosphates. The protein is 5'-nucleotidase SurE of Dichelobacter nodosus (strain VCS1703A).